We begin with the raw amino-acid sequence, 113 residues long: Parvalbumin beta (113 aa).

An N-acetylalanine modification is found at Ala-1. S-linked (Glc) cysteine glycosylation is present at Cys-18. 2 consecutive EF-hand domains span residues 38 to 73 (FSAD…FAAD) and 77 to 112 (LTDA…WGAK). The Ca(2+) site is built by Asp-51, Asp-53, Glu-55, Phe-57, Glu-59, Glu-62, Asp-90, Asp-92, Asp-94, Lys-96, and Glu-101.

It belongs to the parvalbumin family. In terms of tissue distribution, muscle (at protein level).

In muscle, parvalbumin is thought to be involved in relaxation after contraction. It binds two calcium ions. This Gadus morhua subsp. callarias (Baltic cod) protein is Parvalbumin beta.